The primary structure comprises 1440 residues: Genome polyprotein (1440 aa).

Residues 32–53 (GGNEGSIMWLASLAVVIACAGA) constitute a propeptide, ER anchor for the capsid protein C, removed in mature form by serine protease NS3. A helical membrane pass occupies residues 36–56 (GSIMWLASLAVVIACAGAMKL). At 57-180 (SNFQGKLLMT…ATRYLMKTEN (124 aa)) the chain is on the extracellular side. An N-linked (GlcNAc...) asparagine; by host glycan is attached at N68. Residues 181–201 (WIVRNPGYAFLAAILGWMLGS) traverse the membrane as a helical segment. The Cytoplasmic portion of the chain corresponds to 202–207 (NNGQRR). Residues 208 to 222 (WYFTILLLLVAPAYS) form a helical membrane-spanning segment. The Extracellular segment spans residues 223 to 674 (FNCLGMGNRD…QVFGGAFRTL (452 aa)). 6 disulfide bridges follow: C225–C252, C282–C338, C282–C343, C296–C327, C314–C338, and C314–C343. Residues 320–333 (DRGWGNGCGLFGKG) form a fusion peptide region. A glycan (N-linked (GlcNAc...) asparagine; by host) is linked at N376. 2 disulfide bridges follow: C412–C509 and C526–C557. The helical transmembrane segment at 675–695 (FGGMSWITQGLMGALLLWMGV) threads the bilayer. Residues 696–701 (NARDRS) are Cytoplasmic-facing. The chain crosses the membrane as a helical span at residues 702–722 (IALAFLATGGVLVFLATNVHA). Residues 723–1147 (DTGCAIDITR…AFAEANSGGD (425 aa)) lie on the Extracellular side of the membrane. 6 cysteine pairs are disulfide-bonded: C726-C737, C777-C865, C901-C945, C1002-C1051, C1013-C1034, and C1035-C1038. N852 and N929 each carry an N-linked (GlcNAc...) asparagine; by host glycan. A helical membrane pass occupies residues 1148–1168 (VLHLALIAVFKIQPAFLVMNM). The Cytoplasmic portion of the chain corresponds to 1169–1178 (LSTRWTNQEN). Residues 1179–1199 (VVLVLGAAFFHLASVDLQIGV) form a helical membrane-spanning segment. H1200 is a topological domain (lumenal). Residues 1201 to 1221 (GILNAAAIAWMIVRAITFPTT) traverse the membrane as a helical segment. Residues 1222 to 1237 (SSVTMPVLALLTPGMR) lie on the Cytoplasmic side of the membrane. The helical transmembrane segment at 1238 to 1258 (ALYLDTYRIILLVIGICSLLQ) threads the bilayer. Residues 1259–1269 (ERKKTMAKKKG) are Lumenal-facing. Residues 1270–1290 (AVLLGLALTSTGWFSPTTIAA) form a helical membrane-spanning segment. The Cytoplasmic segment spans residues 1291–1302 (GLMVCNPNKKRG). The helical transmembrane segment at 1303–1323 (WPATEFLSAVGLMFAIVGGLA) threads the bilayer. Topologically, residues 1324 to 1326 (ELD) are lumenal. Residues 1327–1347 (IESMSIPFMLAGLMAVSYVVS) traverse the membrane as a helical segment. The Cytoplasmic segment spans residues 1348-1404 (GKATDMWLERAADISWEMDAAITGSSRRLDVKLDDDGDFHLIDDPGVPWKVWVLRMS). The tract at residues 1355–1394 (LERAADISWEMDAAITGSSRRLDVKLDDDGDFHLIDDPGV) is interacts with and activates NS3 protease. An intramembrane region (helical) is located at residues 1405–1425 (CIGLAALTPWAIVPAAFGYWL). Residues 1426–1440 (TLKTTKRGGVFWDTP) lie on the Cytoplasmic side of the membrane.

As to quaternary structure, homodimer. Interacts (via N-terminus) with host EXOC1 (via C-terminus); this interaction results in EXOC1 degradation through the proteasome degradation pathway. In terms of assembly, forms heterodimers with envelope protein E in the endoplasmic reticulum and Golgi. Homodimer; in the endoplasmic reticulum and Golgi. Interacts with protein prM. Interacts with non-structural protein 1. As to quaternary structure, homodimer; Homohexamer when secreted. Interacts with envelope protein E. NS1 interacts with NS4B. Interacts with host complement protein CFH; this interaction leads to the degradation of C3. In terms of assembly, interacts (via N-terminus) with serine protease NS3. Forms a heterodimer with serine protease NS3. May form homooligomers. As to quaternary structure, forms a heterodimer with NS2B. Interacts with non-structural protein 2A (via N-terminus). Interacts with NS4B. Interacts with unphosphorylated RNA-directed RNA polymerase NS5; this interaction stimulates RNA-directed RNA polymerase NS5 guanylyltransferase activity. It depends on Mn(2+) as a cofactor. Mg(2+) serves as cofactor. Post-translationally, specific enzymatic cleavages in vivo yield mature proteins. Cleavages in the lumen of endoplasmic reticulum are performed by host signal peptidase, whereas cleavages in the cytoplasmic side are performed by serine protease NS3. Signal cleavage at the 2K-4B site requires a prior NS3 protease-mediated cleavage at the 4A-2K site. In terms of processing, cleaved in post-Golgi vesicles by a host furin, releasing the mature small envelope protein M, and peptide pr. This cleavage is incomplete as up to 30% of viral particles still carry uncleaved prM. N-glycosylated. Post-translationally, N-glycosylated. The excreted form is glycosylated and this is required for efficient secretion of the protein from infected cells. In terms of processing, RNA-directed RNA polymerase NS5: Phosphorylated on serines residues. This phosphorylation may trigger NS5 nuclear localization.

The protein resides in the virion. It localises to the host nucleus. The protein localises to the host cytoplasm. Its subcellular location is the host perinuclear region. It is found in the secreted. The protein resides in the virion membrane. It localises to the host endoplasmic reticulum membrane. The enzyme catalyses Selective hydrolysis of -Xaa-Xaa-|-Yaa- bonds in which each of the Xaa can be either Arg or Lys and Yaa can be either Ser or Ala.. It carries out the reaction a ribonucleoside 5'-triphosphate + H2O = a ribonucleoside 5'-diphosphate + phosphate + H(+). The catalysed reaction is ATP + H2O = ADP + phosphate + H(+). Functionally, plays a role in virus budding by binding to the cell membrane and gathering the viral RNA into a nucleocapsid that forms the core of a mature virus particle. During virus entry, may induce genome penetration into the host cytoplasm after hemifusion induced by the surface proteins. Can migrate to the cell nucleus where it modulates host functions. Overcomes the anti-viral effects of host EXOC1 by sequestering and degrading the latter through the proteasome degradation pathway. Its function is as follows. Inhibits RNA silencing by interfering with host Dicer. Prevents premature fusion activity of envelope proteins in trans-Golgi by binding to envelope protein E at pH 6.0. After virion release in extracellular space, gets dissociated from E dimers. In terms of biological role, acts as a chaperone for envelope protein E during intracellular virion assembly by masking and inactivating envelope protein E fusion peptide. prM is the only viral peptide matured by host furin in the trans-Golgi network probably to avoid catastrophic activation of the viral fusion activity in acidic Golgi compartment prior to virion release. prM-E cleavage is inefficient, and many virions are only partially matured. These uncleaved prM would play a role in immune evasion. Functionally, may play a role in virus budding. Exerts cytotoxic effects by activating a mitochondrial apoptotic pathway through M ectodomain. May display a viroporin activity. Its function is as follows. Binds to host cell surface receptor and mediates fusion between viral and cellular membranes. Envelope protein is synthesized in the endoplasmic reticulum in the form of heterodimer with protein prM. They play a role in virion budding in the ER, and the newly formed immature particle is covered with 60 spikes composed of heterodimer between precursor prM and envelope protein E. The virion is transported to the Golgi apparatus where the low pH causes dissociation of PrM-E heterodimers and formation of E homodimers. prM-E cleavage is inefficient, and many virions are only partially matured. These uncleaved prM would play a role in immune evasion. Involved in immune evasion, pathogenesis and viral replication. Once cleaved off the polyprotein, is targeted to three destinations: the viral replication cycle, the plasma membrane and the extracellular compartment. Essential for viral replication. Required for formation of the replication complex and recruitment of other non-structural proteins to the ER-derived membrane structures. Excreted as a hexameric lipoparticle that plays a role against host immune response. Antagonizing the complement function. Binds to the host macrophages and dendritic cells. Inhibits signal transduction originating from Toll-like receptor 3 (TLR3). In terms of biological role, component of the viral RNA replication complex that functions in virion assembly and antagonizes the host alpha/beta interferon antiviral response. Functionally, required cofactor for the serine protease function of NS3. May have membrane-destabilizing activity and form viroporins. Its function is as follows. Displays three enzymatic activities: serine protease, NTPase and RNA helicase. NS3 serine protease, in association with NS2B, performs its autocleavage and cleaves the polyprotein at dibasic sites in the cytoplasm: C-prM, NS2A-NS2B, NS2B-NS3, NS3-NS4A, NS4A-2K and NS4B-NS5. NS3 RNA helicase binds RNA and unwinds dsRNA in the 3' to 5' direction. Non-structural protein 4A: Regulates the ATPase activity of the NS3 helicase activity. NS4A allows NS3 helicase to conserve energy during unwinding. In terms of biological role, peptide 2k: Functions as a signal peptide for NS4B and is required for the interferon antagonism activity of the latter. Functionally, non-structural protein 4B: Induces the formation of ER-derived membrane vesicles where the viral replication takes place. Inhibits interferon (IFN)-induced host STAT1 phosphorylation and nuclear translocation, thereby preventing the establishment of cellular antiviral state by blocking the IFN-alpha/beta pathway. Inhibits STAT2 translocation in the nucleus after IFN-alpha treatment. Its function is as follows. RNA-directed RNA polymerase NS5: Replicates the viral (+) and (-) RNA genome. Performs the capping of genomes in the cytoplasm. NS5 methylates viral RNA cap at guanine N-7 and ribose 2'-O positions. Besides its role in RNA genome replication, also prevents the establishment of cellular antiviral state by blocking the interferon-alpha/beta (IFN-alpha/beta) signaling pathway. Inhibits host TYK2 and STAT2 phosphorylation, thereby preventing activation of JAK-STAT signaling pathway. In Japanese encephalitis virus (strain Nakayama) (JEV), this protein is Genome polyprotein.